We begin with the raw amino-acid sequence, 1310 residues long: Multidrug resistance protein 4 (1310 aa).

A run of 5 helical transmembrane segments spans residues 48–68 (WLDLILLAVGIFGSIGCGVLT), 125–145 (MVCFAIGSGVGSFLMTFCFFV), 196–216 (KFGIIFQTTTSFIAGYAIGFA), 223–243 (LVIMSMSPFIVLSMTLLAVFA), and 299–319 (GLTVGLGLGAVMFFIMGAFSL). In terms of domain architecture, ABC transmembrane type-1 1 spans 55–368 (AVGIFGSIGC…IAIPLNIFAT (314 aa)). N-linked (GlcNAc...) asparagine glycosylation is present at N336. The chain crosses the membrane as a helical span at residues 342–362 (VMIVFICVLIATQGLSIIAIP). N-linked (GlcNAc...) asparagine glycosylation occurs at N402. The ABC transporter 1 domain maps to 403-642 (ITLEDVQFRY…KGTYYGLVKR (240 aa)). 438-445 (GASGCGKS) is a binding site for ATP. N608 carries N-linked (GlcNAc...) asparagine glycosylation. The next 2 membrane-spanning stretches (helical) occupy residues 721 to 741 (WFLSTFGFIGGIGGGAIFPFF) and 773 to 793 (IIVVVIGVASFLSFFMYIGLF). Residues 722–1030 (FLSTFGFIGG…LGNIVPDIGK (309 aa)) form the ABC transmembrane type-1 2 domain. N816 carries N-linked (GlcNAc...) asparagine glycosylation. Helical transmembrane passes span 849 to 869 (VGNVIHIISTIGFALGIAFYY), 871 to 891 (WKVSLAVMAVSPVLIVVVFIN), and 945 to 965 (IGIYKWAPLLSIFMCLTTLLT). Residues 1065 to 1304 (IEFKDICFRY…KGFYYTLAMQ (240 aa)) form the ABC transporter 2 domain. 1100-1107 (GASGCGKS) is a binding site for ATP.

Belongs to the ABC transporter superfamily. ABCB family. Multidrug resistance exporter (TC 3.A.1.201) subfamily.

The protein resides in the membrane. The enzyme catalyses ATP + H2O + xenobioticSide 1 = ADP + phosphate + xenobioticSide 2.. Energy-dependent efflux pump responsible for decreased drug accumulation in multidrug resistance parasites. This Entamoeba histolytica (strain ATCC 30459 / HM-1:IMSS / ABRM) protein is Multidrug resistance protein 4.